The chain runs to 263 residues: Proteasome subunit alpha type-1 (263 aa).

At methionine 1 the chain carries N-acetylmethionine. At serine 110 the chain carries Phosphoserine; alternate. Serine 110 carries an O-linked (GlcNAc) serine; alternate glycan. Lysine 115 participates in a covalent cross-link: Glycyl lysine isopeptide (Lys-Gly) (interchain with G-Cter in ubiquitin). Serine 177 bears the Phosphoserine mark. Lysine 208 is covalently cross-linked (Glycyl lysine isopeptide (Lys-Gly) (interchain with G-Cter in ubiquitin)). Residues 232–263 are disordered; sequence FLEGLEERPQRKAQPTQPADEPAEKADEPMEH. Basic and acidic residues predominate over residues 253–263; the sequence is PAEKADEPMEH.

The protein belongs to the peptidase T1A family. As to quaternary structure, the 26S proteasome consists of a 20S proteasome core and two 19S regulatory subunits. The 20S proteasome core is a barrel-shaped complex made of 28 subunits that are arranged in four stacked rings. The two outer rings are each formed by seven alpha subunits, and the two inner rings are formed by seven beta subunits. The proteolytic activity is exerted by three beta-subunits PSMB5, PSMB6 and PSMB7. Interacts with NOTCH3. Interacts with ZFAND1.

It localises to the cytoplasm. The protein localises to the nucleus. Its function is as follows. Component of the 20S core proteasome complex involved in the proteolytic degradation of most intracellular proteins. This complex plays numerous essential roles within the cell by associating with different regulatory particles. Associated with two 19S regulatory particles, forms the 26S proteasome and thus participates in the ATP-dependent degradation of ubiquitinated proteins. The 26S proteasome plays a key role in the maintenance of protein homeostasis by removing misfolded or damaged proteins that could impair cellular functions, and by removing proteins whose functions are no longer required. Associated with the PA200 or PA28, the 20S proteasome mediates ubiquitin-independent protein degradation. This type of proteolysis is required in several pathways including spermatogenesis (20S-PA200 complex) or generation of a subset of MHC class I-presented antigenic peptides (20S-PA28 complex). This is Proteasome subunit alpha type-1 (PSMA1) from Bos taurus (Bovine).